The primary structure comprises 362 residues: 3-isopropylmalate dehydrogenase (362 aa).

77–88 lines the NAD(+) pocket; the sequence is GPKWGTGAVRPE. Substrate is bound by residues Arg95, Arg105, Arg134, and Asp223. Mg(2+) contacts are provided by Asp223, Asp248, and Asp252. An NAD(+)-binding site is contributed by 287–298; that stretch reads GSAPDLPPNKVN.

Belongs to the isocitrate and isopropylmalate dehydrogenases family. In terms of assembly, homodimer. The cofactor is Mg(2+). Mn(2+) serves as cofactor.

The protein resides in the cytoplasm. It carries out the reaction (2R,3S)-3-isopropylmalate + NAD(+) = 4-methyl-2-oxopentanoate + CO2 + NADH. The protein operates within amino-acid biosynthesis; L-leucine biosynthesis; L-leucine from 3-methyl-2-oxobutanoate: step 3/4. Its function is as follows. Catalyzes the oxidation of 3-carboxy-2-hydroxy-4-methylpentanoate (3-isopropylmalate) to 3-carboxy-4-methyl-2-oxopentanoate. The product decarboxylates to 4-methyl-2 oxopentanoate. This is 3-isopropylmalate dehydrogenase (LEU2) from Blastobotrys adeninivorans (Yeast).